We begin with the raw amino-acid sequence, 268 residues long: NH(3)-dependent NAD(+) synthetase (268 aa).

Residue 45–52 (GLSGGIDS) coordinates ATP. D51 is a binding site for Mg(2+). A deamido-NAD(+)-binding site is contributed by R129. ATP is bound at residue T149. E154 is a binding site for Mg(2+). K162 and D169 together coordinate deamido-NAD(+). Residues K178 and T200 each coordinate ATP. 260 to 261 (HK) contributes to the deamido-NAD(+) binding site.

It belongs to the NAD synthetase family. As to quaternary structure, homodimer.

The enzyme catalyses deamido-NAD(+) + NH4(+) + ATP = AMP + diphosphate + NAD(+) + H(+). Its pathway is cofactor biosynthesis; NAD(+) biosynthesis; NAD(+) from deamido-NAD(+) (ammonia route): step 1/1. Catalyzes the ATP-dependent amidation of deamido-NAD to form NAD. Uses ammonia as a nitrogen source. The sequence is that of NH(3)-dependent NAD(+) synthetase from Halobacterium salinarum (strain ATCC 29341 / DSM 671 / R1).